We begin with the raw amino-acid sequence, 499 residues long: 3-octaprenyl-4-hydroxybenzoate carboxy-lyase (499 aa).

Asparagine 173 provides a ligand contact to Mn(2+). Residues 176-178, 190-192, and 195-196 each bind prenylated FMN; these read IYR, RWL, and RG. Residue glutamate 239 coordinates Mn(2+). Aspartate 288 functions as the Proton donor in the catalytic mechanism.

Belongs to the UbiD family. Homohexamer. Prenylated FMN is required as a cofactor. Mn(2+) serves as cofactor.

It is found in the cell membrane. The enzyme catalyses a 4-hydroxy-3-(all-trans-polyprenyl)benzoate + H(+) = a 2-(all-trans-polyprenyl)phenol + CO2. The protein operates within cofactor biosynthesis; ubiquinone biosynthesis. In terms of biological role, catalyzes the decarboxylation of 3-octaprenyl-4-hydroxy benzoate to 2-octaprenylphenol, an intermediate step in ubiquinone biosynthesis. This Blochmanniella floridana protein is 3-octaprenyl-4-hydroxybenzoate carboxy-lyase.